Here is a 512-residue protein sequence, read N- to C-terminus: Rab11 family-interacting protein 2 (512 aa).

The 120-residue stretch at 1 to 120 (MMLSEQAQKW…DKQRRKTEWF (120 aa)) folds into the C2 domain. The necessary for its cellular translocation to the plasma membrane stretch occupies residues 15–102 (VQVTVLQAKD…GLDKFLGQVA (88 aa)). Disordered regions lie at residues 174-231 (RKSD…MSDL) and 263-287 (PESG…NQPG). Polar residues-rich tracts occupy residues 221-231 (RLSSAHSMSDL) and 277-287 (SFDTSKLNQPG). Ser227 is modified (phosphoserine; by MARK2). A Phosphoserine modification is found at Ser277. The NPF 1 motif lies at 323–325 (NPF). Positions 347–374 (KESKREKREKVSLFERVTGKRDSRRPDK) are enriched in basic and acidic residues. Residues 347 to 390 (KESKREKREKVSLFERVTGKRDSRRPDKLNNGGSDSPCDLKSPS) form a disordered region. Short sequence motifs (NPF) lie at residues 406 to 408 (NPF) and 440 to 442 (NPF). In terms of domain architecture, FIP-RBD spans 437 to 499 (PDNNPFDATA…EETPSILRVP (63 aa)). Residues 465–512 (ELLRRKDTHIRELEDYIDNLLVRVMEETPSILRVPYEPSRKAGKFTNS) form a necessary for interaction with AP2A1, RAB11A, subcellular location, endocytosis activity and homooligomerization region.

As to quaternary structure, homooligomerizes in a Rab11-independent manner. Forms a heterooligomeric complex with RAB11FIP4. Interacts with AP2A1, MYO5B, RAB25 and REPS1. Interacts with RAB11A and RAB11B (activated GTP-bound form). Interacts with NPC1L1. Interacts (via NPF motifs) with EHD1 and EHD3. Interacts with TICAM2; this interaction directs RAB11FIP2 to the phagosome. Interacts with RAB14 and RAB25 (GTP-bound forms). Post-translationally, phosphorylation at Ser-227 by MARK2 regulates epithelial cell polarity.

The protein localises to the cell membrane. The protein resides in the recycling endosome membrane. Its function is as follows. A Rab11 effector binding preferentially phosphatidylinositol 3,4,5-trisphosphate (PtdInsP3) and phosphatidic acid (PA) and acting in the regulation of the transport of vesicles from the endosomal recycling compartment (ERC) to the plasma membrane. Involved in insulin granule exocytosis. Also involved in receptor-mediated endocytosis and membrane trafficking of recycling endosomes, probably originating from clathrin-coated vesicles. Required in a complex with MYO5B and RAB11 for the transport of NPC1L1 to the plasma membrane. Also acts as a regulator of cell polarity. Plays an essential role in phagocytosis through a mechanism involving TICAM2, RAC1 and CDC42 Rho GTPases for controlling actin-dynamics. The polypeptide is Rab11 family-interacting protein 2 (Rab11fip2) (Mus musculus (Mouse)).